The sequence spans 382 residues: D-galactonate dehydratase (382 aa).

Asp183 provides a ligand contact to Mg(2+). The active-site Proton donor is His185. Positions 209 and 235 each coordinate Mg(2+). His285 serves as the catalytic Proton acceptor. The interval 361–382 (NENPPDWRNPVWRHSDGSIAEW) is disordered.

The protein belongs to the mandelate racemase/muconate lactonizing enzyme family. GalD subfamily. Requires Mg(2+) as cofactor.

It catalyses the reaction D-galactonate = 2-dehydro-3-deoxy-D-galactonate + H2O. The protein operates within carbohydrate acid metabolism; D-galactonate degradation; D-glyceraldehyde 3-phosphate and pyruvate from D-galactonate: step 1/3. Functionally, catalyzes the dehydration of D-galactonate to 2-keto-3-deoxy-D-galactonate. The chain is D-galactonate dehydratase from Xanthomonas oryzae pv. oryzae (strain MAFF 311018).